Consider the following 759-residue polypeptide: uncharacterized protein (759 aa).

The MCM domain occupies 352–556 (VIQKLSDYAF…KDEDIADFSI (205 aa)). 397–404 (SDPGVGKS) is a binding site for ATP.

It belongs to the MCM family.

This is an uncharacterized protein from Methanocaldococcus jannaschii (strain ATCC 43067 / DSM 2661 / JAL-1 / JCM 10045 / NBRC 100440) (Methanococcus jannaschii).